Consider the following 284-residue polypeptide: Bifunctional protein FolD (284 aa).

Residues 165–167 (GRS) and Ser190 contribute to the NADP(+) site.

This sequence belongs to the tetrahydrofolate dehydrogenase/cyclohydrolase family. As to quaternary structure, homodimer.

It carries out the reaction (6R)-5,10-methylene-5,6,7,8-tetrahydrofolate + NADP(+) = (6R)-5,10-methenyltetrahydrofolate + NADPH. It catalyses the reaction (6R)-5,10-methenyltetrahydrofolate + H2O = (6R)-10-formyltetrahydrofolate + H(+). The protein operates within one-carbon metabolism; tetrahydrofolate interconversion. Functionally, catalyzes the oxidation of 5,10-methylenetetrahydrofolate to 5,10-methenyltetrahydrofolate and then the hydrolysis of 5,10-methenyltetrahydrofolate to 10-formyltetrahydrofolate. In Streptococcus equi subsp. zooepidemicus (strain H70), this protein is Bifunctional protein FolD.